A 476-amino-acid chain; its full sequence is FAD-dependent monooxygenase prhF (476 aa).

Residues E41, G55, and R114 each contribute to the FAD site. Y222 is an active-site residue. 2 residues coordinate FAD: D314 and A327. An N-linked (GlcNAc...) asparagine glycan is attached at N343. A helical membrane pass occupies residues 447–467 (LGSTPIQMLTLLLPCLFYFMY). N-linked (GlcNAc...) asparagine glycosylation occurs at N471.

It belongs to the paxM FAD-dependent monooxygenase family. FAD is required as a cofactor.

Its subcellular location is the membrane. Its pathway is secondary metabolite biosynthesis; terpenoid biosynthesis. In terms of biological role, FAD-dependent monooxygenase; part of the gene cluster that mediates the biosynthesis of paraherquonin, a meroterpenoid with a unique, highly congested hexacyclic molecular architecture. The first step of the pathway is the synthesis of 3,5-dimethylorsellinic acid (DMOA) by the polyketide synthase prhL. Synthesis of DMOA is followed by farnesylation by the prenyltransferase prhE, methylesterification by the methyl-transferase prhM, epoxidation of the prenyl chain by the flavin-dependent monooxygenase prhF, and cyclization of the farnesyl moiety by the terpene cyclase prhH, to yield the tetracyclic intermediate, protoaustinoid A. The short chain dehydrogenase prhI then oxidizes the C-3 alcohol group of the terpene cyclase product to transform protoaustinoid A into protoaustinoid B. The FAD-binding monooxygenase prhJ catalyzes the oxidation of protoaustinoid B into preaustinoid A which is further oxidized into preaustinoid A1 by FAD-binding monooxygenase phrK. Finally, prhA leads to berkeleydione via the berkeleyone B intermediate. PrhA is a multifunctional dioxygenase that first desaturates at C5-C6 to form berkeleyone B, followed by rearrangement of the A/B-ring to form the cycloheptadiene moiety in berkeleydione. Berkeleydione serves as the key intermediate for the biosynthesis of paraherquonin as well as many other meroterpenoids. The cytochrome P450 monooxygenases prhB, prhD, and prhN, as well as the isomerase prhC, are probably involved in the late stage of paraherquonin biosynthesis, after the production of berkeleydione. Especially prhC might be a multifunctional enzyme that catalyzes the D-ring expansion via intramolecular methoxy rearrangement, as well as the hydrolysis of the expanded D-ring. This Penicillium brasilianum protein is FAD-dependent monooxygenase prhF.